The chain runs to 298 residues: 4-nitrophenylphosphatase (298 aa).

In terms of assembly, homodimer. In terms of processing, the N-terminus is blocked.

The enzyme catalyses 4-nitrophenyl phosphate + H2O = 4-nitrophenol + phosphate + H(+). Activity enhanced by Mg(2+) ion but inhibited by Zn(2+) ion. The polypeptide is 4-nitrophenylphosphatase (pho2) (Schizosaccharomyces pombe (strain 972 / ATCC 24843) (Fission yeast)).